Consider the following 543-residue polypeptide: Allantoate permease (543 aa).

Topologically, residues 1–80 (MSADASTNSN…PEEDRKLRWK (80 aa)) are cytoplasmic. Residues 81-97 (IDYCMFPLMCILYAVQF) traverse the membrane as a helical segment. Residues 98-123 (MDKISTSSAAVMGLRTDLKMHGDQYS) lie on the Extracellular side of the membrane. Residues 124–145 (WVTSAFYFGYLFMNLGPVQFIF) traverse the membrane as a helical segment. Topologically, residues 146-154 (QRTSHMSKM) are cytoplasmic. Residues 155–171 (LAVFIVIWGMLLALHAA) traverse the membrane as a helical segment. Topologically, residues 172–178 (PTVKYPS) are extracellular. A helical membrane pass occupies residues 179–200 (FIVLRVLLGCAESVVTPCFTII). The Cytoplasmic segment spans residues 201–213 (TAQYWKTEEQFTR). A helical membrane pass occupies residues 214-237 (VSIWFGMNGLGSILINAIAYGVYI). Residues 238–248 (HQDSYAIKGWR) lie on the Extracellular side of the membrane. The chain crosses the membrane as a helical span at residues 249–269 (TLFVITGVITIFIGILIFLWI). Residues 270-317 (PDDPSKARFLSKREKLMVVQRIRSNQQGFGNHEIKKYQIIEALKDVRT) are Cytoplasmic-facing. Residues 318–342 (WLYFLFTVSSNIPNGGISSFMSILL) traverse the membrane as a helical segment. Residues 343 to 352 (NSDFGYSSKE) are Extracellular-facing. The helical transmembrane segment at 353–377 (TLLMGLPTGAVELVGCPLFGILAVY) threads the bilayer. The Cytoplasmic portion of the chain corresponds to 378–389 (AANKKIPFWKYK). The helical transmembrane segment at 390 to 411 (LSWAIFAAVLALIASCMLGFAT) threads the bilayer. At 412 to 417 (NSKKAR) the chain is on the extracellular side. The chain crosses the membrane as a helical span at residues 418–435 (LAGAYLWYISPVSFICVL). The Cytoplasmic portion of the chain corresponds to 436-453 (SNISANSSGYSKKWTVSS). A helical transmembrane segment spans residues 454–472 (INLVAYAAANLAGPQTFIA). Residues 473 to 482 (KQAPKYHGAK) are Extracellular-facing. Residues 483-504 (VAMVVCYAVMIVLLSILLIVNL) form a helical membrane-spanning segment. Over 505–543 (RENKRRDKIAAERGFPEETENLEFSDLTDFENPNFRYTL) the chain is Cytoplasmic.

This sequence belongs to the major facilitator superfamily. Allantoate permease family.

It is found in the membrane. Component of the allantoate transport system. The chain is Allantoate permease (DAL5) from Saccharomyces cerevisiae (strain ATCC 204508 / S288c) (Baker's yeast).